A 388-amino-acid chain; its full sequence is MRYLTAGESHGPGLTTIIEGLPAGMPLLAEDVNKELKRRQGGHGRGARMRIEKDQVQITAGIRHGKTLGAPVAMFVENKDWKHWETVMSIEPVPEKNEKSRRVSRPRPGHADLVGGMKYGHNDMRNVLERSSARETTVRVAAGAVAKKLLHELGIEVAGHVLEIGGTRANLKRDYAVSEIQETSEASPVRCLDEVAAEEMMQKIDDAKKNGDTIGGIVEVVVGGVPAGLGSYVQWDKKLDAKIARAIVSINAFKGAEFGVGFEAARKPGSEVMDEILWSKEDGYTRRTNNLGGFEGGMTNGMPIVVRGVMKPIPTLYKPLQSVDIDSKETFNASVERSDSCAVPAASVVAEAVVAWEVAVAVLEKFDGDRFDTLKKHVEEHRNLTKEF.

Positions 39 and 45 each coordinate NADP(+). Residues 95 to 118 (EKNEKSRRVSRPRPGHADLVGGMK) are disordered. Residues 130 to 132 (RSS), 251 to 252 (NA), G296, 311 to 315 (KPIPT), and R337 each bind FMN.

The protein belongs to the chorismate synthase family. Homotetramer. Requires FMNH2 as cofactor.

The enzyme catalyses 5-O-(1-carboxyvinyl)-3-phosphoshikimate = chorismate + phosphate. It participates in metabolic intermediate biosynthesis; chorismate biosynthesis; chorismate from D-erythrose 4-phosphate and phosphoenolpyruvate: step 7/7. Catalyzes the anti-1,4-elimination of the C-3 phosphate and the C-6 proR hydrogen from 5-enolpyruvylshikimate-3-phosphate (EPSP) to yield chorismate, which is the branch point compound that serves as the starting substrate for the three terminal pathways of aromatic amino acid biosynthesis. This reaction introduces a second double bond into the aromatic ring system. The protein is Chorismate synthase of Listeria innocua serovar 6a (strain ATCC BAA-680 / CLIP 11262).